The following is a 230-amino-acid chain: Endonuclease NucS (230 aa).

Belongs to the NucS endonuclease family.

It is found in the cytoplasm. Its function is as follows. Cleaves both 3' and 5' ssDNA extremities of branched DNA structures. This Corynebacterium glutamicum (strain ATCC 13032 / DSM 20300 / JCM 1318 / BCRC 11384 / CCUG 27702 / LMG 3730 / NBRC 12168 / NCIMB 10025 / NRRL B-2784 / 534) protein is Endonuclease NucS.